A 632-amino-acid polypeptide reads, in one-letter code: Galactan 5-O-arabinofuranosyltransferase (632 aa).

13 helical membrane passes run 10–30, 45–65, 76–96, 162–182, 184–204, 206–226, 242–259, 263–282, 298–318, 344–364, 375–395, 409–429, and 434–454; these read QIVLAAVVASGVAAVSLIAIA, ALTTVGQVGCLTGLLAVGGVW, LGGLVFVSAFTVVTLGMPLGA, WAITSITIAVAITLVLWWQMI, FEYALLVTIATAAVTLVYSSP, PYAAMITVLLPPALVLTWSGL, GWATVVGAGIFLGFAATW, LLAYTAFTVVLMTLLLATAL, LAGIVVIAAAIGAITWLPFLA, FPMLQFSLLGMICMLGTLWLI, ALMISVLAVYLWSLLSILTTL, LTVLLVTAGVFGFIETAQSLA, and AVLSVASAIGLAGAIAFSQDI. Residues 455-632 lie on the Extracellular side of the membrane; that stretch reads PNVLRPDLTI…LAIRKPMGNA (178 aa).

It belongs to the glycosyltransferase 85 family.

It localises to the cell membrane. It catalyses the reaction Adds an alpha-D-arabinofuranosyl group from trans,octacis-decaprenylphospho-beta-D-arabinofuranose at the 5-O-position of the eighth, tenth and twelfth galactofuranose unit of the galactofuranan chain of [beta-D-galactofuranosyl-(1-&gt;5)-beta-D-galactofuranosyl-(1-&gt;6)]14-beta-D-galactofuranosyl-(1-&gt;5)-beta-D-galactofuranosyl-(1-&gt;4)-alpha-L-rhamnopyranosyl-(1-&gt;3)-N-acetyl-alpha-D-glucosaminyl-diphospho-trans,octacis-decaprenol.. Its pathway is cell wall biogenesis; cell wall polysaccharide biosynthesis. In terms of biological role, involved in the biosynthesis of the arabinogalactan (AG) region of the mycolylarabinogalactan-peptidoglycan (mAGP) complex, an essential component of the mycobacterial cell wall. Catalyzes the addition of the first key arabinofuranosyl (Araf) residue from the sugar donor decaprenyl-phospho-arabinose (DPA) on the C-5 of a 6-linked galactofuranosyl (Galf) of the galactan domain, thus 'priming' the galactan for further elaboration by other arabinofuranosyltransferases. The protein is Galactan 5-O-arabinofuranosyltransferase of Mycobacterium leprae (strain TN).